Consider the following 373-residue polypeptide: MWVCGALCRTRAPAQLGQRLLPESRRRRPASASFSASAEPSRVRALVYGHHGDPAKVVELKNLELAAVGGSHVHVKMLAAPINPSDINMIQGNYGLLPQLPAVGGNEGVGQVVAVGSGVTGVKPGDWVIPANPGLGTWRTEAVFGEEELITVPSDIPLQSAATLGVNPCTAYRMLVDFERLRPRDSIIQNASNSGVGQAVIQIAAARGLRTINVLRDTPDLQKLTDTLKNLGANHVVTEEELRKPEMKSFFKDVPQPRLALNCVGGKSSTELLRHLAPGGTMVTYGGMAKQPVIASVSQLIFKDLKLRGFWLSQWKKDHSPDQFKELILTLCDLIRRGQLTAPACSEVPLQDYLCALEASTQPFVSSKQILTM.

A mitochondrion-targeting transit peptide spans methionine 1 to aspartate 53. Lysine 61 is modified (N6-acetyllysine; alternate). The residue at position 61 (lysine 61) is an N6-succinyllysine; alternate. Tyrosine 94 functions as the Proton donor in the catalytic mechanism. NADP(+) is bound by residues asparagine 167, asparagine 193–valine 196, and arginine 216–threonine 218. An N6-acetyllysine; alternate mark is found at lysine 252 and lysine 267. N6-succinyllysine; alternate occurs at positions 252 and 267. NADP(+)-binding positions include tyrosine 285–methionine 288 and phenylalanine 310–leucine 312. Lysine 316 is modified (N6-succinyllysine). Residue lysine 368 participates in NADP(+) binding.

It belongs to the zinc-containing alcohol dehydrogenase family. Quinone oxidoreductase subfamily. In terms of assembly, homodimer.

The protein resides in the mitochondrion. The enzyme catalyses a 2,3-saturated acyl-[ACP] + NADP(+) = a (2E)-enoyl-[ACP] + NADPH + H(+). It carries out the reaction (2E)-butenoyl-[ACP] + NADPH + H(+) = butanoyl-[ACP] + NADP(+). It catalyses the reaction (2E)-hexenoyl-[ACP] + NADPH + H(+) = hexanoyl-[ACP] + NADP(+). The catalysed reaction is (2E)-octenoyl-[ACP] + NADPH + H(+) = octanoyl-[ACP] + NADP(+). The enzyme catalyses (2E)-decenoyl-[ACP] + NADPH + H(+) = decanoyl-[ACP] + NADP(+). It carries out the reaction (2E)-dodecenoyl-[ACP] + NADPH + H(+) = dodecanoyl-[ACP] + NADP(+). It catalyses the reaction (2E)-tetradecenoyl-[ACP] + NADPH + H(+) = tetradecanoyl-[ACP] + NADP(+). The catalysed reaction is (2E)-hexadecenoyl-[ACP] + NADPH + H(+) = hexadecanoyl-[ACP] + NADP(+). Functionally, catalyzes the NADPH-dependent reduction of trans-2-enoyl thioesters in mitochondrial fatty acid synthesis (fatty acid synthesis type II). Fatty acid chain elongation in mitochondria uses acyl carrier protein (ACP) as an acyl group carrier, but the enzyme accepts both ACP and CoA thioesters as substrates in vitro. Displays a preference for medium-chain over short- and long-chain substrates. May provide the octanoyl chain used for lipoic acid biosynthesis, regulating protein lipoylation and mitochondrial respiratory activity particularly in Purkinje cells. Involved in iron homeostasis; affecting Fe-S cluster assembly and ceramide metabolism. Required for proper morphology and bioenergetic functions of mitochondria. Required for maintenance of neurons. The chain is Enoyl-[acyl-carrier-protein] reductase, mitochondrial (MECR) from Bos taurus (Bovine).